The primary structure comprises 880 residues: Alanine--tRNA ligase (880 aa).

His-565, His-569, Cys-675, and His-679 together coordinate Zn(2+).

It belongs to the class-II aminoacyl-tRNA synthetase family. Zn(2+) is required as a cofactor.

The protein resides in the cytoplasm. The catalysed reaction is tRNA(Ala) + L-alanine + ATP = L-alanyl-tRNA(Ala) + AMP + diphosphate. Functionally, catalyzes the attachment of alanine to tRNA(Ala) in a two-step reaction: alanine is first activated by ATP to form Ala-AMP and then transferred to the acceptor end of tRNA(Ala). Also edits incorrectly charged Ser-tRNA(Ala) and Gly-tRNA(Ala) via its editing domain. In Granulibacter bethesdensis (strain ATCC BAA-1260 / CGDNIH1), this protein is Alanine--tRNA ligase.